A 391-amino-acid chain; its full sequence is Formate-dependent phosphoribosylglycinamide formyltransferase (391 aa).

Residues 20-21 (EL) and E80 each bind N(1)-(5-phospho-beta-D-ribosyl)glycinamide. Residues R112, K153, 158 to 163 (SSGKGQ), 193 to 196 (EGFV), and E201 each bind ATP. The region spanning 117-306 (RLAAEELQLP…EFALHVRAFT (190 aa)) is the ATP-grasp domain. 2 residues coordinate Mg(2+): E265 and E277. Residues D284, K354, and 361–362 (RR) each bind N(1)-(5-phospho-beta-D-ribosyl)glycinamide.

This sequence belongs to the PurK/PurT family. Homodimer.

It catalyses the reaction N(1)-(5-phospho-beta-D-ribosyl)glycinamide + formate + ATP = N(2)-formyl-N(1)-(5-phospho-beta-D-ribosyl)glycinamide + ADP + phosphate + H(+). Its pathway is purine metabolism; IMP biosynthesis via de novo pathway; N(2)-formyl-N(1)-(5-phospho-D-ribosyl)glycinamide from N(1)-(5-phospho-D-ribosyl)glycinamide (formate route): step 1/1. In terms of biological role, involved in the de novo purine biosynthesis. Catalyzes the transfer of formate to 5-phospho-ribosyl-glycinamide (GAR), producing 5-phospho-ribosyl-N-formylglycinamide (FGAR). Formate is provided by PurU via hydrolysis of 10-formyl-tetrahydrofolate. This is Formate-dependent phosphoribosylglycinamide formyltransferase from Aliivibrio fischeri (strain ATCC 700601 / ES114) (Vibrio fischeri).